Reading from the N-terminus, the 86-residue chain is DNA-directed RNA polymerase subunit Rpo11 (86 aa).

Belongs to the archaeal Rpo11/eukaryotic RPB11/RPC19 RNA polymerase subunit family. As to quaternary structure, part of the RNA polymerase complex.

It localises to the cytoplasm. The enzyme catalyses RNA(n) + a ribonucleoside 5'-triphosphate = RNA(n+1) + diphosphate. DNA-dependent RNA polymerase (RNAP) catalyzes the transcription of DNA into RNA using the four ribonucleoside triphosphates as substrates. This Archaeoglobus fulgidus (strain ATCC 49558 / DSM 4304 / JCM 9628 / NBRC 100126 / VC-16) protein is DNA-directed RNA polymerase subunit Rpo11.